A 227-amino-acid chain; its full sequence is DNA repair protein RecO (227 aa).

The protein belongs to the RecO family.

Involved in DNA repair and RecF pathway recombination. This is DNA repair protein RecO from Pseudomonas putida (strain W619).